The chain runs to 349 residues: Fe(3+) ions import ATP-binding protein FbpC (349 aa).

Residues 4–236 (LDFNKIGKSY…PIDEPTATFL (233 aa)) enclose the ABC transporter domain. Residue 36–43 (GPSGSGKT) participates in ATP binding.

Belongs to the ABC transporter superfamily. Fe(3+) ion importer (TC 3.A.1.10) family. In terms of assembly, the complex is composed of two ATP-binding proteins (FbpC), two transmembrane proteins (FbpB) and a solute-binding protein (FbpA).

Its subcellular location is the cell inner membrane. The catalysed reaction is Fe(3+)(out) + ATP + H2O = Fe(3+)(in) + ADP + phosphate + H(+). Functionally, part of the ABC transporter complex FbpABC involved in Fe(3+) ions import. Responsible for energy coupling to the transport system. This chain is Fe(3+) ions import ATP-binding protein FbpC, found in Yersinia enterocolitica.